Reading from the N-terminus, the 1070-residue chain is DNA double-strand break repair Rad50 ATPase (1070 aa).

ATP contacts are provided by residues R12, 32–38, and Q142; that span reads NGSGKSS. Coiled coils occupy residues 227 to 257, 369 to 403, and 449 to 478; these read LEEL…RLQE, ECRT…EKAG, and LREL…KEIR. In terms of domain architecture, Zinc-hook spans 508–607; that stretch reads LENLEDFNEL…KLNRLKEAKK (100 aa). Residues C555 and C558 each contribute to the Zn(2+) site. Coiled coils occupy residues 570 to 614 and 878 to 908; these read TAEE…QAYD and LKRL…ADEL. 969–974 serves as a coordination point for ATP; that stretch reads LLSGGE.

Belongs to the SMC family. RAD50 subfamily. As to quaternary structure, homodimer. Forms a heterotetramer composed of two Mre11 subunits and two Rad50 subunits. The cofactor is Zn(2+).

Its function is as follows. Part of the Rad50/Mre11 complex, which is involved in the early steps of DNA double-strand break (DSB) repair. The complex may facilitate opening of the processed DNA ends to aid in the recruitment of HerA and NurA. Rad50 controls the balance between DNA end bridging and DNA resection via ATP-dependent structural rearrangements of the Rad50/Mre11 complex. This chain is DNA double-strand break repair Rad50 ATPase, found in Methanosarcina mazei (strain ATCC BAA-159 / DSM 3647 / Goe1 / Go1 / JCM 11833 / OCM 88) (Methanosarcina frisia).